Consider the following 429-residue polypeptide: MSEPLLRGLAAGDPPSATGPVTGSADKVADVLIVGGGLVGGTLACALAEKGVSVVVIDGEDPEALLAAGYDGRCSAIALACQRLLDTIGLWDLLGGESQPILDIRVVDGGSPLFLHYAQAEAQGPMGYMVENRLLRQAILTRLGRLPAATLLAPARMTALRRDLDGVSATLSDGQTVRARLVVGADGRRSQVRESAGIGIRTLGYGQTAIVLTVEHERSHRGCAVEHFLPAGPFAILPMPGNRSSLVWTERSDLVPGLLALPAEHFQAELERRFGDHLGWVRPVGPRFSYRLTLQAANRYVDHRLALVGDAAHGMHPVAGQGMNYGLRDVAVLAERLVAAQRLGLDPGAPALLAEYEALRRPDNLLMLAITDALVRLFSNDIAPVALARRLGIGAVERMGPLKRLFMRHAMGTLKLGPEPPRLMRGVPL.

Residues 1-22 (MSEPLLRGLAAGDPPSATGPVT) form a disordered region.

It belongs to the UbiH/COQ6 family. FAD is required as a cofactor.

The catalysed reaction is a 2-(all-trans-polyprenyl)phenol + NADPH + O2 + H(+) = a 3-(all-trans-polyprenyl)benzene-1,2-diol + NADP(+) + H2O. Its pathway is cofactor biosynthesis; ubiquinone biosynthesis. In terms of biological role, catalyzes the hydroxylation of two positions of the aromatic ring during ubiquinone biosynthesis. This is Ubiquinone hydroxylase UbiL from Rhodospirillum rubrum (strain ATCC 11170 / ATH 1.1.1 / DSM 467 / LMG 4362 / NCIMB 8255 / S1).